A 172-amino-acid polypeptide reads, in one-letter code: MSVLQVLTFPDDRLRTVAKPVDAVTPEIQKIVDDMIETMYDEEGIGLAATQVDIHKRIVVIDISETRDEPMVLINPEILEKRGEDGIEEGCLSVPGARALVPRAAEVTVKALDRDGKEFTFEADDLLAICVQHELDHLQGKLFVDYLSPLKRKRIQDKLAKIKRFNEKQQNA.

2 residues coordinate Fe cation: Cys-91 and His-133. Glu-134 is an active-site residue. Residue His-137 participates in Fe cation binding.

The protein belongs to the polypeptide deformylase family. It depends on Fe(2+) as a cofactor.

The enzyme catalyses N-terminal N-formyl-L-methionyl-[peptide] + H2O = N-terminal L-methionyl-[peptide] + formate. Functionally, removes the formyl group from the N-terminal Met of newly synthesized proteins. Requires at least a dipeptide for an efficient rate of reaction. N-terminal L-methionine is a prerequisite for activity but the enzyme has broad specificity at other positions. This is Peptide deformylase 1 from Vibrio parahaemolyticus serotype O3:K6 (strain RIMD 2210633).